Consider the following 175-residue polypeptide: Hypoxanthine-guanine phosphoribosyltransferase (175 aa).

Lysine 40 and glycine 41 together coordinate diphosphate. Residues glutamate 96 and aspartate 97 each contribute to the Mg(2+) site. Aspartate 100 (proton acceptor) is an active-site residue. Residues lysine 128, 149–150, and aspartate 156 contribute to the GMP site; that span reads FL. Diphosphate is bound at residue arginine 162.

The protein belongs to the purine/pyrimidine phosphoribosyltransferase family. Requires Mg(2+) as cofactor.

It is found in the cytoplasm. The catalysed reaction is IMP + diphosphate = hypoxanthine + 5-phospho-alpha-D-ribose 1-diphosphate. The enzyme catalyses GMP + diphosphate = guanine + 5-phospho-alpha-D-ribose 1-diphosphate. It participates in purine metabolism; IMP biosynthesis via salvage pathway; IMP from hypoxanthine: step 1/1. Its pathway is purine metabolism; GMP biosynthesis via salvage pathway; GMP from guanine: step 1/1. In terms of biological role, purine salvage pathway enzyme that catalyzes the transfer of the ribosyl-5-phosphate group from 5-phospho-alpha-D-ribose 1-diphosphate (PRPP) to the N9 position of the 6-oxopurines hypoxanthine and guanine to form the corresponding ribonucleotides IMP (inosine 5'-monophosphate) and GMP (guanosine 5'-monophosphate), with the release of PPi. The polypeptide is Hypoxanthine-guanine phosphoribosyltransferase (hpt) (Mycoplasma genitalium (strain ATCC 33530 / DSM 19775 / NCTC 10195 / G37) (Mycoplasmoides genitalium)).